The chain runs to 66 residues: Sarcoplasmic/endoplasmic reticulum calcium ATPase regulator ARLN (66 aa).

M1 carries the N-acetylmethionine modification. The interval 1-37 is disordered; the sequence is MEVDAPGVDGRDGLRERRGFSEGGRQNFDVRPQSGAN. The segment covering 9–20 has biased composition (basic and acidic residues); it reads DGRDGLRERRGF. The helical transmembrane segment at 45 to 65 threads the bilayer; it reads WLDLWLFILFDVVVFLFVYFL.

Homooligomer. Can also form heterooligomers with other sarcoplasmic/endoplasmic reticulum calcium ATPase (SERCA) regulators ERLN, PLN, SLN and STRIT1/DWORF. Monomer. Interacts as a monomer with ATP2A2/SERCA2; the interaction results in inhibition of ATP2A2 Ca(2+) affinity.

Its subcellular location is the endoplasmic reticulum membrane. Its function is as follows. Inhibits the activity of the calcium ATPases ATP2A2/SERCA2 and ATP2A3/SERCA3 by decreasing their apparent affinity for Ca(2+). The chain is Sarcoplasmic/endoplasmic reticulum calcium ATPase regulator ARLN from Homo sapiens (Human).